A 601-amino-acid chain; its full sequence is Elongation factor 4 (601 aa).

One can recognise a tr-type G domain in the interval 7–189 (SHIRNFSIIA…SIVQLVPPPQ (183 aa)). Residues 19–24 (DHGKST) and 136–139 (NKID) each bind GTP.

The protein belongs to the TRAFAC class translation factor GTPase superfamily. Classic translation factor GTPase family. LepA subfamily.

It localises to the cell inner membrane. It carries out the reaction GTP + H2O = GDP + phosphate + H(+). Its function is as follows. Required for accurate and efficient protein synthesis under certain stress conditions. May act as a fidelity factor of the translation reaction, by catalyzing a one-codon backward translocation of tRNAs on improperly translocated ribosomes. Back-translocation proceeds from a post-translocation (POST) complex to a pre-translocation (PRE) complex, thus giving elongation factor G a second chance to translocate the tRNAs correctly. Binds to ribosomes in a GTP-dependent manner. This Trichodesmium erythraeum (strain IMS101) protein is Elongation factor 4.